A 350-amino-acid chain; its full sequence is Protein O-mannose kinase (350 aa).

Position 1 is an N-acetylmethionine (methionine 1). Residues 1 to 20 are Cytoplasmic-facing; the sequence is MEKQPQNSRRGLAPREVPPA. A helical; Signal-anchor for type II membrane protein membrane pass occupies residues 21–43; it reads VGLLLIMALMNTLLYLCLDHFFI. The Lumenal portion of the chain corresponds to 44–350; the sequence is APRQSTVDPT…AMMSQAREML (307 aa). In terms of domain architecture, Protein kinase spans 81 to 350; it reads VRQLKRVGEG…AMMSQAREML (270 aa). Asparagine 165, asparagine 220, and asparagine 235 each carry an N-linked (GlcNAc...) asparagine glycan.

The protein belongs to the protein kinase superfamily. Ser/Thr protein kinase family. STKL subfamily. In terms of tissue distribution, highest expression is observed in brain, skeletal muscle, kidney and heart in fetal and adult tissues.

It localises to the endoplasmic reticulum membrane. The catalysed reaction is 3-O-[beta-D-GalNAc-(1-&gt;3)-beta-D-GlcNAc-(1-&gt;4)-alpha-D-Man]-L-Thr-[protein] + ATP = 3-O-[beta-D-GalNAc-(1-&gt;3)-beta-D-GlcNAc-(1-&gt;4)-(O-6-P-alpha-D-Man)]-Thr-[protein] + ADP + H(+). Protein O-mannose kinase that specifically mediates phosphorylation at the 6-position of an O-mannose of the trisaccharide (N-acetylgalactosamine (GalNAc)-beta-1,3-N-acetylglucosamine (GlcNAc)-beta-1,4-mannose) to generate phosphorylated O-mannosyl trisaccharide (N-acetylgalactosamine-beta-1,3-N-acetylglucosamine-beta-1,4-(phosphate-6-)mannose). Phosphorylated O-mannosyl trisaccharide is a carbohydrate structure present in alpha-dystroglycan (DAG1), which is required for binding laminin G-like domain-containing extracellular proteins with high affinity. Only shows kinase activity when the GalNAc-beta-3-GlcNAc-beta-terminus is linked to the 4-position of O-mannose, suggesting that this disaccharide serves as the substrate recognition motif. The chain is Protein O-mannose kinase (POMK) from Homo sapiens (Human).